Consider the following 318-residue polypeptide: NLP effector protein 9 (318 aa).

Positions 1–19 are cleaved as a signal peptide; sequence MRLFAFLWSSVAFLSTVQA. Low complexity predominate over residues 24–35; the sequence is TASQTQDDSSTP. Disordered stretches follow at residues 24-43 and 50-93; these read TASQ…PDKY and LRTK…PAPT. The span at 55-65 shows a compositional bias: polar residues; that stretch reads PMATPNRTIMP. N-linked (GlcNAc...) asparagine glycosylation occurs at asparagine 60. Over residues 73-93 the composition is skewed to pro residues; the sequence is PEPPTPEPTYLPTLSPTPAPT. The short motif at 185–195 is the Conserved undecapeptide motif I element; the sequence is AIMYSWYFPKD. A Hepta-peptide GHRHDWE motif II motif is present at residues 202–208; sequence GHRHDWE.

This sequence belongs to the Necrosis inducing protein (NPP1) family.

It localises to the secreted. Its function is as follows. Secreted effector that contributes to virulence during infection by P.capsici. Induces distinct chlorosis at 3 days after inoculation of host C.annuum leaves, and all the chlorotic areas gradually turn brown and become moderately necrotic at 7 days after inoculation. Caused only small necrotic areas at 7 days after non-host N.benthamiana leaves infection. This Phytophthora capsici protein is NLP effector protein 9.